The sequence spans 281 residues: Energy-coupling factor transporter ATP-binding protein EcfA1 (281 aa).

Positions 7–242 (ISVEDIVFRY…NKELVRIGLD (236 aa)) constitute an ABC transporter domain. 42–49 (GHNGSGKS) contributes to the ATP binding site. The active-site Proton acceptor is glutamate 168.

This sequence belongs to the ABC transporter superfamily. Energy-coupling factor EcfA family. In terms of assembly, forms a stable energy-coupling factor (ECF) transporter complex composed of 2 membrane-embedded substrate-binding proteins (S component), 2 ATP-binding proteins (A component) and 2 transmembrane proteins (T component).

Its subcellular location is the cell membrane. Its function is as follows. ATP-binding (A) component of a common energy-coupling factor (ECF) ABC-transporter complex. Unlike classic ABC transporters this ECF transporter provides the energy necessary to transport a number of different substrates. The protein is Energy-coupling factor transporter ATP-binding protein EcfA1 of Bacillus subtilis (strain 168).